A 980-amino-acid chain; its full sequence is Envelope glycoprotein B (980 aa).

The span at 1-14 (MSSGCRSVGGSTWG) shows a compositional bias: polar residues. Disordered regions lie at residues 1 to 20 (MSSGCRSVGGSTWGNWRGDG) and 88 to 118 (TTPSPPTSTPTSMSTHSHGTVDPTLLPTETP). The signal sequence occupies residues 1 to 86 (MSSGCRSVGG…LFGSCVVRAV (86 aa)). Over 87–849 (PTTPSPPTST…SGIASFLNNP (763 aa)) the chain is Virion surface. Residues 96-118 (TPTSMSTHSHGTVDPTLLPTETP) are compositionally biased toward low complexity. Cystine bridges form between cysteine 140–cysteine 647, cysteine 157–cysteine 603, cysteine 231–cysteine 296, cysteine 389–cysteine 437, and cysteine 668–cysteine 708. A glycan (N-linked (GlcNAc...) asparagine; by host) is linked at asparagine 165. An involved in fusion and/or binding to host membrane region spans residues 197–203 (VWKGYSH). The N-linked (GlcNAc...) asparagine; by host glycan is linked to asparagine 275. The tract at residues 282-290 (GWMPWRHYT) is involved in fusion and/or binding to host membrane. 6 N-linked (GlcNAc...) asparagine; by host glycosylation sites follow: asparagine 380, asparagine 423, asparagine 497, asparagine 514, asparagine 515, and asparagine 560. The segment covering 505 to 516 (LLNPNANNNNNT) has biased composition (low complexity). The tract at residues 505–535 (LLNPNANNNNNTTRRRRSLLSVPEPQPTQDG) is disordered. Residues asparagine 727 and asparagine 749 are each glycosylated (N-linked (GlcNAc...) asparagine; by host). Hydrophobic membrane proximal region regions lie at residues 794–847 (IDSV…SFLN) and 823–843 (AVGTLVLGAAGAVVSTVSGIA). A helical transmembrane segment spans residues 850 to 870 (FGGLAIGLLVIAGLVAAFFAY). Residues 871 to 980 (RYVMQIRSNP…NDTMENEKMV (110 aa)) are Intravirion-facing. Positions 925 to 928 (YMSM) match the Golgi targeting motif. The Internalization motif motif lies at 965–968 (YTRL).

The protein belongs to the herpesviridae glycoprotein B family. Homotrimer; disulfide-linked. Binds to heparan sulfate proteoglycans. Interacts with gH/gL heterodimer. A proteolytic cleavage by host furin generates two subunits that remain linked by disulfide bonds.

The protein resides in the virion membrane. It localises to the host cell membrane. The protein localises to the host endosome membrane. Its subcellular location is the host Golgi apparatus membrane. Envelope glycoprotein that forms spikes at the surface of virion envelope. Essential for the initial attachment to heparan sulfate moieties of the host cell surface proteoglycans. Involved in fusion of viral and cellular membranes leading to virus entry into the host cell. Following initial binding to its host receptors, membrane fusion is mediated by the fusion machinery composed at least of gB and the heterodimer gH/gL. May be involved in the fusion between the virion envelope and the outer nuclear membrane during virion egress. In Equus caballus (Horse), this protein is Envelope glycoprotein B.